A 667-amino-acid polypeptide reads, in one-letter code: Acyl-coenzyme A oxidase acox-3 (667 aa).

FAD-binding positions include 138-141 (FCLT), 146-147 (GS), Gly178, Arg313, 334-337 (QQYR), and Gly410. Glu433 (proton acceptor) is an active-site residue. Residue Glu435 participates in FAD binding. The Microbody targeting signal motif lies at 665–667 (SKL).

This sequence belongs to the acyl-CoA oxidase family. Homodimer. Requires FAD as cofactor. In terms of tissue distribution, expressed in intestine.

Its subcellular location is the peroxisome. The catalysed reaction is IC-asc-C7-CoA + O2 = IC-asc-DeltaC7-CoA + H2O2. It catalyses the reaction IC-asc-C9-CoA + O2 = IC-asc-DeltaC9-CoA + H2O2. The enzyme catalyses asc-C13-CoA + O2 = asc-DeltaC13-CoA + H2O2. Its pathway is lipid metabolism; peroxisomal fatty acid beta-oxidation. With respect to regulation, in contrast to other acyl-coenzyme A oxidases which bind to and are activated by ATP, does not bind ATP. In terms of biological role, involved in the first step of peroxisomal beta-oxidation by catalyzing the desaturation of fatty acid-derived side chains of ascaroside pheromones, which regulates development and behavior. Specifically, shortens indol-3-carbonyl(IC)-ascarosides with 7-carbon (IC-asc-C7) or 9-carbon (IC-asc-C9) side chains and contributes to the shortening of ascarosides with 13-carbon (asc-C13) and 15-carbon (asc-C15) side chains. The chain is Acyl-coenzyme A oxidase acox-3 from Caenorhabditis elegans.